An 87-amino-acid polypeptide reads, in one-letter code: Type 3 secretion system needle filament protein (87 aa).

Belongs to the SctF family. The core secretion machinery of the T3SS is composed of approximately 20 different proteins, including cytoplasmic components, a base, an export apparatus and a needle. This subunit polymerizes and forms the helical needle filament. Forms high-order oligomers in vitro. Forms a stable ternary complex with the YscE-YscG chaperone. Interacts directly with YscG but makes very little direct contact with YscE. Interacts with the needle adapter protein YscI/SctI.

The protein localises to the secreted. It localises to the cell surface. The secretion and/or polymerization may be controlled by the type III secretion system regulator YopR. Interaction with YscE-YscG chaperone prevents premature polymerization of YscF/SctF in the bacterial cytosol and is required for its stability and efficient secretion. Interaction with the needle adapter protein YscI/SctI is required for YscF/SctF secretion, needle assembly and Yop secretion. The N-terminus varies among bacterial species, not only in amino acid composition but also in the number of amino acids, and may function in manipulating the host response to the advantage of the bacteria. In Y.pestis, the N-terminus can function to decrease cytokine induction, perhaps contributing to a favorable immune environment leading to survival of Y.pestis within the eukaryotic host. Functionally, component of the type III secretion system (T3SS), also called injectisome, which is used to inject bacterial effector proteins into eukaryotic host cells. YscF/SctF forms the external needle filament that protrudes from the bacterial surface. Essential for the calcium-dependent regulation of T3SS and Yop secretion. Required to block Yop secretion in the presence of extracellular calcium. May be the extracellular T3SS component that senses extracellular calcium and/or participates in transmitting the calcium signal to the cytoplasmic compartment where the block in secretion is initiated. During infection, can induce innate immune responses. The needle proteins interact with host TLR2 or TLR4, and induce signaling by NF-kappa-B and/or AP-1. This activation is MyD88 dependent and results in increased expression of cytokines, including TNF-alpha, IL-6 and IL-8. Innate immune responses are modulated by the N-terminal region of YscF/SctF. This Yersinia pestis protein is Type 3 secretion system needle filament protein.